Consider the following 304-residue polypeptide: Recombination-associated protein RdgC (304 aa).

It belongs to the RdgC family.

The protein localises to the cytoplasm. The protein resides in the nucleoid. Functionally, may be involved in recombination. The sequence is that of Recombination-associated protein RdgC from Shewanella sp. (strain ANA-3).